The primary structure comprises 500 residues: Na(+)/H(+) antiporter NhaB (500 aa).

The next 13 helical transmembrane spans lie at 11–31 (HGFL…FLVL), 34–54 (LLLA…EFIF), 58–78 (MALK…ALLL), 96–116 (VILL…LLLF), 121–141 (ILLG…LSAF), 145–165 (FLDA…FYAV), 205–225 (LLMH…VGEP), 241–261 (FLLK…LTCV), 311–331 (ILII…LMVI), 350–370 (FQDA…VAVI), 394–414 (MLYL…VATI), 450–470 (ATPN…APLI), and 477–497 (MVWM…WAVT).

Belongs to the NhaB Na(+)/H(+) (TC 2.A.34) antiporter family.

It is found in the cell inner membrane. The catalysed reaction is 2 Na(+)(in) + 3 H(+)(out) = 2 Na(+)(out) + 3 H(+)(in). Functionally, na(+)/H(+) antiporter that extrudes sodium in exchange for external protons. The chain is Na(+)/H(+) antiporter NhaB from Pseudomonas putida (strain ATCC 700007 / DSM 6899 / JCM 31910 / BCRC 17059 / LMG 24140 / F1).